The primary structure comprises 321 residues: Ferredoxin--NADP reductase (321 aa).

Glu33, Gln41, Tyr46, Val86, Leu119, Asp277, and Ser318 together coordinate FAD.

The protein belongs to the ferredoxin--NADP reductase type 2 family. Homodimer. Requires FAD as cofactor.

The catalysed reaction is 2 reduced [2Fe-2S]-[ferredoxin] + NADP(+) + H(+) = 2 oxidized [2Fe-2S]-[ferredoxin] + NADPH. This chain is Ferredoxin--NADP reductase, found in Lactococcus lactis subsp. lactis (strain IL1403) (Streptococcus lactis).